We begin with the raw amino-acid sequence, 224 residues long: N-terminal Xaa-Pro-Lys N-methyltransferase 1 (224 aa).

Residues G70, R75, 92 to 94 (DVT), 120 to 121 (LQ), and Q136 contribute to the S-adenosyl-L-methionine site.

This sequence belongs to the methyltransferase superfamily. NTM1 family.

The protein resides in the nucleus. It catalyses the reaction N-terminal L-alanyl-L-prolyl-L-lysyl-[protein] + 3 S-adenosyl-L-methionine = N-terminal N,N,N-trimethyl-L-alanyl-L-prolyl-L-lysyl-[protein] + 3 S-adenosyl-L-homocysteine + 3 H(+). The catalysed reaction is N-terminal L-seryl-L-prolyl-L-lysyl-[protein] + 3 S-adenosyl-L-methionine = N-terminal N,N,N-trimethyl-L-seryl-L-prolyl-L-lysyl-[protein] + 3 S-adenosyl-L-homocysteine + 3 H(+). The enzyme catalyses N-terminal L-prolyl-L-prolyl-L-lysyl-[protein] + 2 S-adenosyl-L-methionine = N-terminal N,N-dimethyl-L-prolyl-L-prolyl-L-lysyl-[protein] + 2 S-adenosyl-L-homocysteine + 2 H(+). In terms of biological role, distributive alpha-N-methyltransferase that methylates the N-terminus of target proteins containing the N-terminal motif [Ala/Gly/Pro/Ser]-Pro-Lys when the initiator Met is cleaved. Specifically catalyzes mono-, di- or tri-methylation of the exposed alpha-amino group of the Ala, Gly or Ser residue in the [Ala/Gly/Ser]-Pro-Lys motif and mono- or di-methylation of Pro in the Pro-Pro-Lys motif. Required during mitosis for normal bipolar spindle formation and chromosome segregation via its action on target proteins. This chain is N-terminal Xaa-Pro-Lys N-methyltransferase 1 (ntmt1), found in Xenopus tropicalis (Western clawed frog).